The chain runs to 878 residues: F-box DNA helicase protein 1 (878 aa).

An F-box domain is found at 8–56; it reads SCKFYRLPLEIIPLICRFLSVQDIQSFIRVFPSFQTILDSSNDLFWKKK.

Belongs to the helicase family. UvrD subfamily. Part of the E3 ubiquitin ligase Skp1-Cullin-1-F-box (SCF) complex. Interacts with skp1 and ssb1. Mg(2+) is required as a cofactor. Mn(2+) serves as cofactor.

The protein localises to the cytoplasm. It is found in the nucleus. It catalyses the reaction Couples ATP hydrolysis with the unwinding of duplex DNA by translocating in the 3'-5' direction.. It carries out the reaction ATP + H2O = ADP + phosphate + H(+). The protein operates within protein modification; protein ubiquitination. Involved in ATP-dependent DNA-unwinding in a 3' to 5' direction, and ATP-ase activities stimulated by the single-stranded DNA-binding protein ssb1. Essential for viability and normal growth of stationary phase cells and in the absence of either srs2 or rqh1 DNA helicase. Involved in DNA recombination repair of strand breaks and stalled or collapsed replication forks, on the rhp51-dependent pathway: promotes rhp51 filament dissolution from stalled forks, thereby inhibiting homologous recombination and preventing excessive recombination. Ubiquitination and DNA helicase activities are essential for controlling rhp51-dependent recombination in the absence of rad22. Plays a role in the processing of toxic recombination intermediates. Promotes proper chromosome segregation. The polypeptide is F-box DNA helicase protein 1 (fbh1) (Schizosaccharomyces pombe (strain 972 / ATCC 24843) (Fission yeast)).